A 336-amino-acid chain; its full sequence is 3-isopropylmalate dehydrogenase (336 aa).

Substrate-binding residues include R87, R97, R121, and D211. Positions 211, 235, and 239 each coordinate Mg(2+). NAD(+) is bound at residue 271 to 283; that stretch reads GSAPDIAGQGIAD.

The protein belongs to the isocitrate and isopropylmalate dehydrogenases family. LeuB type 2 subfamily. In terms of assembly, homodimer. Mg(2+) serves as cofactor. Requires Mn(2+) as cofactor.

Its subcellular location is the cytoplasm. The enzyme catalyses (2R,3S)-3-isopropylmalate + NAD(+) = 4-methyl-2-oxopentanoate + CO2 + NADH. It participates in amino-acid biosynthesis; L-leucine biosynthesis; L-leucine from 3-methyl-2-oxobutanoate: step 3/4. Catalyzes the oxidation of 3-carboxy-2-hydroxy-4-methylpentanoate (3-isopropylmalate) to 3-carboxy-4-methyl-2-oxopentanoate. The product decarboxylates to 4-methyl-2 oxopentanoate. The sequence is that of 3-isopropylmalate dehydrogenase from Mycobacterium leprae (strain Br4923).